Consider the following 54-residue polypeptide: UPF0391 membrane protein msr3702 (54 aa).

2 helical membrane passes run 4–24 and 30–50; these read WALV…GGIA and IAQI…LAGL.

Belongs to the UPF0391 family.

It localises to the cell membrane. This chain is UPF0391 membrane protein msr3702, found in Mesorhizobium japonicum (strain LMG 29417 / CECT 9101 / MAFF 303099) (Mesorhizobium loti (strain MAFF 303099)).